Reading from the N-terminus, the 221-residue chain is Ribosomal RNA small subunit methyltransferase Nep1 (221 aa).

S-adenosyl-L-methionine contacts are provided by residues glycine 174, glycine 179, and 196-201; that span reads LGEVAM.

It belongs to the class IV-like SAM-binding methyltransferase superfamily. RNA methyltransferase NEP1 family. Homodimer.

It catalyses the reaction a pseudouridine in rRNA + S-adenosyl-L-methionine = an N(1)-methylpseudouridine in rRNA + S-adenosyl-L-homocysteine + H(+). Its function is as follows. Methyltransferase involved in ribosomal biogenesis. Specifically catalyzes the N1-methylation of the pseudouridine corresponding to position 914 in M.jannaschii 16S rRNA. The chain is Ribosomal RNA small subunit methyltransferase Nep1 from Pyrobaculum arsenaticum (strain DSM 13514 / JCM 11321 / PZ6).